Consider the following 756-residue polypeptide: MTSIIGAALPYKSPEKAIASSSYSAENDSSPVDAVIFAGTSLVLGTACRYLFNGTRVPYTVVLLVIGIFLGSLEYGTKHNLGKLGHGIRIWNGINPDLLLAVFLPVLLFESSFSMDVHQIKRCMGQMVLLAGPGVLISTFCLGALIKLTFPYNWDWKTSLLLGGLLGATDPVAVVALLKELGASKKMTTLIDGESLMNDGVSVVVFQLFFKMVMGHNSDWGSIIKFLVQNSFGAVGIGLAFGIASVFWLKFIFNDTVAQITVTLSASYFAYYTAQEWAGVSGILTVMILGMFFAAFARTAFKGDSHQSLHHFWEMAAYIANTLVFMLSGVIIAESVLSGQTISYKGNSWSFLFLLYLYVQLSRCVVVGVLYPLLCRSGYGLDWKESIILTWSGLRGAVSLSLALSVKQSSGNSYLSSDTGTRFLFLTGGIVFLTLVVNGSTTQLLLHLLRMDTLTATKKRILEYTKFEMMKTALKAFENLGDDEELGSADWPTVIRHISSLKDLEGRQVNPHDGYEAGSLDPTNIMDIRIRFLNGVQAAYWEMLDDGRITQCTANVLMQSVDEALDLVSTSSLSDWRGLEPRVHFPNYYKFLQSKIIPHKLVTHLIVERLESACYISSAFLRAHRIARQQLHIFLGNSNIASTVINESEVEGEEAKQFLEDVRDSFPQVLSVLKTRQVTHYVLNHLNGYIKNLEKVGLLEGKEVSHLHDVVQSDLKKLLRHPPSLKLPNVDDLITSNPLLKDRSSFRSLAIGETDA.

The Extracellular segment spans residues M1–P31. N27 carries an N-linked (GlcNAc...) asparagine glycan. A helical membrane pass occupies residues V32 to F52. Over N53 to R56 the chain is Cytoplasmic. A helical transmembrane segment spans residues V57 to T77. Over K78–R89 the chain is Extracellular. The chain crosses the membrane as a helical span at residues I90–E110. Topologically, residues S111–G125 are cytoplasmic. A helical transmembrane segment spans residues Q126–I146. At K147 to K157 the chain is on the extracellular side. The helical transmembrane segment at T158 to L178 threads the bilayer. Residues K179 to E194 are Cytoplasmic-facing. The chain crosses the membrane as a helical span at residues S195–G215. At H216–K225 the chain is on the extracellular side. Residues F226–W248 form a helical membrane-spanning segment. The Cytoplasmic segment spans residues L249–F251. Residues I252–Y271 form a helical membrane-spanning segment. The Extracellular portion of the chain corresponds to Y272–E276. A helical transmembrane segment spans residues W277 to A297. The Cytoplasmic portion of the chain corresponds to R298–H311. A helical membrane pass occupies residues F312–I332. Topologically, residues A333–S350 are extracellular. Residues F351 to Y371 traverse the membrane as a helical segment. Over P372–E385 the chain is Cytoplasmic. The chain crosses the membrane as a helical span at residues S386–V406. Topologically, residues K407–R422 are extracellular. The helical transmembrane segment at F423–Q443 threads the bilayer. At L444–A756 the chain is on the cytoplasmic side.

It belongs to the monovalent cation:proton antiporter 1 (CPA1) transporter (TC 2.A.36) family.

It is found in the cell membrane. It carries out the reaction Na(+)(in) + H(+)(out) = Na(+)(out) + H(+)(in). The catalysed reaction is K(+)(in) + H(+)(out) = K(+)(out) + H(+)(in). May act in low affinity electroneutral exchange of protons for cations such as Na(+) or K(+) across membranes. May also exchange Li(+) and Cs(+) with a lower affinity. The protein is Sodium/hydrogen exchanger 8 (NHX8) of Arabidopsis thaliana (Mouse-ear cress).